Consider the following 313-residue polypeptide: Pantoate--beta-alanine ligase (313 aa).

36–43 is an ATP binding site; it reads MGYLHQGH. Residue H43 is the Proton donor of the active site. (R)-pantoate is bound at residue Q71. Q71 contributes to the beta-alanine binding site. 178–181 contacts ATP; the sequence is GKKD. Q184 provides a ligand contact to (R)-pantoate. 215-218 is an ATP binding site; the sequence is MSSR.

Belongs to the pantothenate synthetase family. As to quaternary structure, homodimer.

It is found in the cytoplasm. The protein localises to the cytosol. The catalysed reaction is (R)-pantoate + beta-alanine + ATP = (R)-pantothenate + AMP + diphosphate + H(+). Its pathway is cofactor biosynthesis; (R)-pantothenate biosynthesis; (R)-pantothenate from (R)-pantoate and beta-alanine: step 1/1. Its function is as follows. Catalyzes the condensation of pantoate with beta-alanine to form pantothenate. Essential for panthotenate biosynthesis. The polypeptide is Pantoate--beta-alanine ligase (PANC) (Oryza sativa subsp. japonica (Rice)).